The following is a 118-amino-acid chain: UPF0102 protein RHA1_ro06551 (118 aa).

Belongs to the UPF0102 family.

The chain is UPF0102 protein RHA1_ro06551 from Rhodococcus jostii (strain RHA1).